Reading from the N-terminus, the 115-residue chain is Aspartate 1-decarboxylase (115 aa).

S25 functions as the Schiff-base intermediate with substrate; via pyruvic acid in the catalytic mechanism. Position 25 is a pyruvic acid (Ser) (S25). Residue T57 participates in substrate binding. Catalysis depends on Y58, which acts as the Proton donor. Residue 71-73 (GAA) coordinates substrate.

This sequence belongs to the PanD family. As to quaternary structure, heterooctamer of four alpha and four beta subunits. Pyruvate is required as a cofactor. Post-translationally, is synthesized initially as an inactive proenzyme, which is activated by self-cleavage at a specific serine bond to produce a beta-subunit with a hydroxyl group at its C-terminus and an alpha-subunit with a pyruvoyl group at its N-terminus.

Its subcellular location is the cytoplasm. It catalyses the reaction L-aspartate + H(+) = beta-alanine + CO2. It participates in cofactor biosynthesis; (R)-pantothenate biosynthesis; beta-alanine from L-aspartate: step 1/1. Catalyzes the pyruvoyl-dependent decarboxylation of aspartate to produce beta-alanine. The protein is Aspartate 1-decarboxylase of Campylobacter curvus (strain 525.92).